The chain runs to 1009 residues: Probable beta-galactosidase B (1009 aa).

An N-terminal signal peptide occupies residues 1-27 (MKTIAGLSWISALSSLASLPNGLGVSA). Y96 provides a ligand contact to substrate. N-linked (GlcNAc...) asparagine glycosylation occurs at N106. Substrate contacts are provided by N141, A142, E143, and N201. E202 serves as the catalytic Proton donor. Y271 serves as a coordination point for substrate. A disulfide bridge links C277 with C330. E314 acts as the Nucleophile in catalysis. A substrate-binding site is contributed by Y379. N-linked (GlcNAc...) asparagine glycans are attached at residues N467, N495, N547, N593, N632, N672, N707, N775, N782, N789, N795, and N914.

The protein belongs to the glycosyl hydrolase 35 family.

It localises to the secreted. It catalyses the reaction Hydrolysis of terminal non-reducing beta-D-galactose residues in beta-D-galactosides.. In terms of biological role, cleaves beta-linked terminal galactosyl residues from gangliosides, glycoproteins, and glycosaminoglycans. This Pyrenophora tritici-repentis (strain Pt-1C-BFP) (Wheat tan spot fungus) protein is Probable beta-galactosidase B (lacB).